A 515-amino-acid polypeptide reads, in one-letter code: Bifunctional purine biosynthesis protein PurH (515 aa).

The MGS-like domain occupies 1–145; it reads MTKRVLISVS…KNHASVTVVV (145 aa).

It belongs to the PurH family.

The catalysed reaction is (6R)-10-formyltetrahydrofolate + 5-amino-1-(5-phospho-beta-D-ribosyl)imidazole-4-carboxamide = 5-formamido-1-(5-phospho-D-ribosyl)imidazole-4-carboxamide + (6S)-5,6,7,8-tetrahydrofolate. It carries out the reaction IMP + H2O = 5-formamido-1-(5-phospho-D-ribosyl)imidazole-4-carboxamide. It participates in purine metabolism; IMP biosynthesis via de novo pathway; 5-formamido-1-(5-phospho-D-ribosyl)imidazole-4-carboxamide from 5-amino-1-(5-phospho-D-ribosyl)imidazole-4-carboxamide (10-formyl THF route): step 1/1. The protein operates within purine metabolism; IMP biosynthesis via de novo pathway; IMP from 5-formamido-1-(5-phospho-D-ribosyl)imidazole-4-carboxamide: step 1/1. In Streptococcus pneumoniae serotype 19F (strain G54), this protein is Bifunctional purine biosynthesis protein PurH.